The chain runs to 103 residues: MYAVIKTGGKQYKVAVGEKLKVEQIPADIDAEITLDQVLAVGEGESIKFGTPLVSGASVKATVVSQGRHAKVTIFKMRRRKHYQKHGGHRQNYTELRIDAINA.

This sequence belongs to the bacterial ribosomal protein bL21 family. Part of the 50S ribosomal subunit. Contacts protein L20.

Functionally, this protein binds to 23S rRNA in the presence of protein L20. The polypeptide is Large ribosomal subunit protein bL21 (Paraburkholderia phytofirmans (strain DSM 17436 / LMG 22146 / PsJN) (Burkholderia phytofirmans)).